We begin with the raw amino-acid sequence, 609 residues long: Oxidoreductase tpcJ (609 aa).

An N-terminal signal peptide occupies residues 1-16 (MITVIKWLVSGCCALA). N-linked (GlcNAc...) asparagine glycans are attached at residues Asn63, Asn107, Asn113, Asn240, Asn283, Asn471, and Asn601. Plastocyanin-like domains lie at 66–186 (VSQQ…HGPS), 196–351 (PWLL…RYDE), and 429–567 (VDWK…EQPK).

It belongs to the multicopper oxidase family. In terms of tissue distribution, specifically expressed in conidia.

The protein operates within secondary metabolite biosynthesis. In terms of biological role, oxidoreductase; part of the gene cluster that mediates the biosynthesis of trypacidin, a mycotoxin with antiprotozoal activity and that plays a role in the infection process. The pathway begins with the synthesis of atrochrysone thioester by the polyketide synthase (PKS) tpcC. The atrochrysone carboxyl ACP thioesterase tpcB then breaks the thioester bond and releases the atrochrysone carboxylic acid from tpcC. The decarboxylase tpcK converts atrochrysone carboxylic acid to atrochrysone which is further reduced into emodin anthrone. The next step is performed by the emodin anthrone oxygenase tpcL that catalyzes the oxidation of emodinanthrone to emodin. Emodin O-methyltransferase encoded by tpcA catalyzes methylation of the 8-hydroxy group of emodin to form questin. Ring cleavage of questin by questin oxidase tpcI leads to desmethylsulochrin via several intermediates including questin epoxide. Another methylation step catalyzed by tpcM leads to the formation of sulochrin which is further converted to monomethylsulfochrin by tpcH. Finally, the tpcJ catalyzes the conversion of monomethylsulfochrin to trypacidin. Trypacidin is toxic for human pulmonary and bronchial epithelial cells by initiating the intracellular formation of nitric oxide (NO) and hydrogen peroxide (H(2)O(2)), thus triggering host necrotic cell death. The trypacidin pathway is also able to produce endocrocin via a distinct route from the endocrocin Enc pathway. This chain is Oxidoreductase tpcJ, found in Aspergillus fumigatus (strain ATCC MYA-4609 / CBS 101355 / FGSC A1100 / Af293) (Neosartorya fumigata).